Reading from the N-terminus, the 258-residue chain is Imidazole glycerol phosphate synthase subunit HisF (258 aa).

Residues D12 and D131 contribute to the active site.

The protein belongs to the HisA/HisF family. As to quaternary structure, heterodimer of HisH and HisF.

The protein resides in the cytoplasm. It catalyses the reaction 5-[(5-phospho-1-deoxy-D-ribulos-1-ylimino)methylamino]-1-(5-phospho-beta-D-ribosyl)imidazole-4-carboxamide + L-glutamine = D-erythro-1-(imidazol-4-yl)glycerol 3-phosphate + 5-amino-1-(5-phospho-beta-D-ribosyl)imidazole-4-carboxamide + L-glutamate + H(+). It functions in the pathway amino-acid biosynthesis; L-histidine biosynthesis; L-histidine from 5-phospho-alpha-D-ribose 1-diphosphate: step 5/9. IGPS catalyzes the conversion of PRFAR and glutamine to IGP, AICAR and glutamate. The HisF subunit catalyzes the cyclization activity that produces IGP and AICAR from PRFAR using the ammonia provided by the HisH subunit. The protein is Imidazole glycerol phosphate synthase subunit HisF of Nocardioides sp. (strain ATCC BAA-499 / JS614).